A 169-amino-acid chain; its full sequence is Desumoylating isopeptidase 1 (169 aa).

One can recognise a PPPDE domain in the interval 8–150 (HLVRLYVYDM…LGQALRPLLD (143 aa)). Residue His39 is part of the active site. Residues 84–92 (IFLEYLSSL) carry the Nuclear export signal 1 motif. Cys109 is an active-site residue. The Nuclear export signal 2 signature appears at 140 to 154 (PLGQALRPLLDSVQI).

This sequence belongs to the DeSI family. Homodimer.

The protein resides in the cytoplasm. It localises to the nucleus. The catalysed reaction is S-hexadecanoyl-L-cysteinyl-[protein] + H2O = L-cysteinyl-[protein] + hexadecanoate + H(+). Functionally, protease which deconjugates SUMO1, SUMO2 and SUMO3 from some substrate proteins. Has isopeptidase but not SUMO-processing activity. Collaborates with ubqln4 in the export of ubiquitinated proteins from the nucleus to the cytoplasm. Exhibits palmitoyl protein thioesterase (S-depalmitoylation) activity towards synthetic substrates 4-methylumbelliferyl-6-S-palmitoyl-beta-D-glucopyranoside and S-depalmitoylation probe 5 (DPP-5). The protein is Desumoylating isopeptidase 1 of Xenopus laevis (African clawed frog).